Here is a 419-residue protein sequence, read N- to C-terminus: 26S proteasome regulatory subunit 8 homolog A (419 aa).

At alanine 2 the chain carries N-acetylalanine. 202-209 (GPPGTGKT) lines the ATP pocket. Lysine 406 is covalently cross-linked (Glycyl lysine isopeptide (Lys-Gly) (interchain with G-Cter in ubiquitin)).

This sequence belongs to the AAA ATPase family. As to quaternary structure, component of the 19S regulatory particle (RP/PA700) base subcomplex of the 26S proteasome. The 26S proteasome is composed of a core protease (CP), known as the 20S proteasome, capped at one or both ends by the 19S regulatory particle (RP/PA700). The RP/PA700 complex is composed of at least 17 different subunits in two subcomplexes, the base and the lid, which form the portions proximal and distal to the 20S proteolytic core, respectively.

It localises to the cytoplasm. The protein resides in the nucleus. Functionally, the 26S proteasome is involved in the ATP-dependent degradation of ubiquitinated proteins. The regulatory (or ATPase) complex confers ATP dependency and substrate specificity to the 26S complex. This is 26S proteasome regulatory subunit 8 homolog A (RPT6A) from Arabidopsis thaliana (Mouse-ear cress).